Consider the following 412-residue polypeptide: MTLRRRGEKATISIQEHMAIDVCPGPIRPIKQISDYFPRFPRGLPPTAAPRAPAPPDAPARSPAASASPRSPSDGARDDDEDVDQLFGAYGASPGPSPGPSPARPPAKPPEDEPDVDGYESDDCTALGTLDFSLLYDQENNALHCTISKAKGLKPMDHNGLADPYVKLHLLPGASKANKLRTKTLRNTLNPSWNETLTYYGITDEDMVRKTLRISVCDEDKFRHNEFIGETRVPLKKLKPNHTKTFSICLEKQLPVDKAEDKSLEERGRILISLKYSSQKQGLLVGIVRCAHLAAMDANGYSDPYVKTYLKPDVDKKSKHKTAVKKKTLNPEFNEEFCYEIKHGDLAKKTLEVTVWDYDIGKSNDFIGGVVLGINAKGERLKHWFDCLKNKDKRIERWHTLTNELPGAVLSD.

Positions 1–36 (MTLRRRGEKATISIQEHMAIDVCPGPIRPIKQISDY) are negatively regulates targeting to plasma membrane. A mediates interaction with DYNLT1 region spans residues 1–90 (MTLRRRGEKA…EDVDQLFGAY (90 aa)). The disordered stretch occupies residues 38-123 (PRFPRGLPPT…PDVDGYESDD (86 aa)). Residues 43–58 (GLPPTAAPRAPAPPDA) are compositionally biased toward pro residues. Residues 59–74 (PARSPAASASPRSPSD) show a composition bias toward low complexity. Pro residues predominate over residues 95–108 (GPSPGPSPARPPAK). Positions 112–123 (DEPDVDGYESDD) are enriched in acidic residues. 2 consecutive C2 domains span residues 126–250 (ALGT…SICL) and 266–399 (ERGR…ERWH). Ca(2+) contacts are provided by aspartate 157, aspartate 163, aspartate 218, aspartate 220, aspartate 297, aspartate 303, aspartate 357, aspartate 359, and aspartate 365. Positions 257–375 (DKAEDKSLEE…FIGGVVLGIN (119 aa)) are mediates interaction with STXBP3. A Phosphoserine modification is found at serine 411.

In terms of assembly, interacts with cytoplasmic dynein light chain DYNLT1. May interact with UNC13A; the interaction mediates targeting to the plasma membrane. Probably interacts with the SNARE (soluble N-ethylmaleimide-sensitive factor attached protein receptor) complex composed of SNAP25, STX1A and VAMP2; the interaction is calcium-dependent and competitive with SYT1. Interacts with STX4; the interaction is calcium-dependent, increased by insulin and glucose, and mediates vesicle fusion with plasma membrane in pancreatic cells and adipocytes. Interacts with STXBP3; the interaction is direct, occurs at the cell membrane and regulates glucose-stimulated insulin secretion. Ca(2+) serves as cofactor. In terms of tissue distribution, widely expressed. Expressed in pancreatic islet cells (at protein level).

Its subcellular location is the cytoplasm. The protein resides in the cytoplasmic granule. The protein localises to the cell membrane. In terms of biological role, calcium sensor which positively regulates SNARE-dependent fusion of vesicles with membranes. Binds phospholipids in a calcium-dependent manner and may act at the priming stage of fusion by modifying membrane curvature to stimulate fusion. Involved in calcium-triggered exocytosis in chromaffin cells and calcium-dependent spontaneous release of neurotransmitter in absence of action potentials in neuronal cells. Involved both in glucose-stimulated insulin secretion in pancreatic cells and insulin-dependent GLUT4 transport to the plasma membrane in adipocytes. The polypeptide is Double C2-like domain-containing protein beta (Doc2b) (Mus musculus (Mouse)).